The primary structure comprises 332 residues: 2,3-diketo-L-gulonate reductase (332 aa).

His-44 serves as the catalytic Proton donor. NAD(+) contacts are provided by residues 168–174 (ITMVDMS), 224–225 (WK), and 304–306 (GHE).

It belongs to the LDH2/MDH2 oxidoreductase family. DlgD subfamily. As to quaternary structure, homodimer.

The protein localises to the cytoplasm. It catalyses the reaction 3-dehydro-L-gulonate + NAD(+) = 2,3-dioxo-L-gulonate + NADH + H(+). The enzyme catalyses 3-dehydro-L-gulonate + NADP(+) = 2,3-dioxo-L-gulonate + NADPH + H(+). Its function is as follows. Catalyzes the reduction of 2,3-diketo-L-gulonate in the presence of NADH, to form 3-keto-L-gulonate. This is 2,3-diketo-L-gulonate reductase from Escherichia coli (strain K12 / MC4100 / BW2952).